A 334-amino-acid polypeptide reads, in one-letter code: UDP-N-acetylglucosamine--N-acetylmuramyl-(pentapeptide) pyrophosphoryl-undecaprenol N-acetylglucosamine transferase (334 aa).

UDP-N-acetyl-alpha-D-glucosamine is bound by residues 11-13 (TGG), N125, S185, I229, and Q274.

This sequence belongs to the glycosyltransferase 28 family. MurG subfamily.

It is found in the cell inner membrane. The catalysed reaction is di-trans,octa-cis-undecaprenyl diphospho-N-acetyl-alpha-D-muramoyl-L-alanyl-D-glutamyl-meso-2,6-diaminopimeloyl-D-alanyl-D-alanine + UDP-N-acetyl-alpha-D-glucosamine = di-trans,octa-cis-undecaprenyl diphospho-[N-acetyl-alpha-D-glucosaminyl-(1-&gt;4)]-N-acetyl-alpha-D-muramoyl-L-alanyl-D-glutamyl-meso-2,6-diaminopimeloyl-D-alanyl-D-alanine + UDP + H(+). Its pathway is cell wall biogenesis; peptidoglycan biosynthesis. Functionally, cell wall formation. Catalyzes the transfer of a GlcNAc subunit on undecaprenyl-pyrophosphoryl-MurNAc-pentapeptide (lipid intermediate I) to form undecaprenyl-pyrophosphoryl-MurNAc-(pentapeptide)GlcNAc (lipid intermediate II). In Thermosipho melanesiensis (strain DSM 12029 / CIP 104789 / BI429), this protein is UDP-N-acetylglucosamine--N-acetylmuramyl-(pentapeptide) pyrophosphoryl-undecaprenol N-acetylglucosamine transferase.